Reading from the N-terminus, the 212-residue chain is Uracil phosphoribosyltransferase (212 aa).

5-phospho-alpha-D-ribose 1-diphosphate is bound by residues Arg78, Arg103, and 130–138 (DPMLATGGS). Uracil-binding positions include Ile193 and 198–200 (GDA). Asp199 contributes to the 5-phospho-alpha-D-ribose 1-diphosphate binding site.

It belongs to the UPRTase family. Mg(2+) is required as a cofactor.

It carries out the reaction UMP + diphosphate = 5-phospho-alpha-D-ribose 1-diphosphate + uracil. It participates in pyrimidine metabolism; UMP biosynthesis via salvage pathway; UMP from uracil: step 1/1. With respect to regulation, allosterically activated by GTP. Its function is as follows. Catalyzes the conversion of uracil and 5-phospho-alpha-D-ribose 1-diphosphate (PRPP) to UMP and diphosphate. This chain is Uracil phosphoribosyltransferase, found in Azotobacter vinelandii (strain DJ / ATCC BAA-1303).